Reading from the N-terminus, the 630-residue chain is Phosphatidylinositol 4-kinase gamma 5 (630 aa).

Residues 41–98 (RRVFVQTETGCVLGLELDRSDNAHTVKRKLQVALNFPIEESSLTFGDLVLKNDLTAVR) enclose the Ubiquitin-like; degenerate domain. One can recognise a PI3K/PI4K catalytic domain in the interval 162–459 (GIDPVAVNSG…LIGEKDAESP (298 aa)). The segment at 168 to 174 (VNSGLGG) is G-loop. ATP-binding positions include 169–175 (NSGLGGA), Lys-190, and 279–282 (QQFI). The catalytic loop stretch occupies residues 312–320 (LNTDRHSGN). The tract at residues 339-365 (PIDHGLCLPETLEDPYFEWIHWPQASI) is activation loop. Asp-341 contacts ATP. The segment at 500-527 (LSKVEETTEDGEEEEEEDREEEENDRAD) is disordered. Positions 506-524 (TTEDGEEEEEEDREEEEND) are enriched in acidic residues. The residue at position 571 (Ser-571) is a Phosphoserine.

Belongs to the PI3/PI4-kinase family. Type II PI4K subfamily. In terms of assembly, interacts with AHK2.

It catalyses the reaction a 1,2-diacyl-sn-glycero-3-phospho-(1D-myo-inositol) + ATP = a 1,2-diacyl-sn-glycero-3-phospho-(1D-myo-inositol 4-phosphate) + ADP + H(+). The phosphorylation of phosphatidylinositol (PI) to PI4P is the first committed step in the generation of phosphatidylinositol 4,5-bisphosphate (PIP2), a precursor of the second messenger inositol 1,4,5-trisphosphate (InsP3). The sequence is that of Phosphatidylinositol 4-kinase gamma 5 (PI4KG5) from Arabidopsis thaliana (Mouse-ear cress).